The following is a 208-amino-acid chain: Transmembrane protein 160 (208 aa).

The transit peptide at 1-45 (MASIRWLMGSRLSRFVCPFAQLVRQPVLRYVRPPVRALHRGSVRR) directs the protein to the mitochondrion. 3 consecutive transmembrane segments (helical) span residues 82–102 (GFLS…IAFV), 110–130 (AGYA…ASYV), and 147–167 (VLLH…AVSL). A compositionally biased stretch (acidic residues) spans 181-192 (DDEEHGADESSE). Residues 181–208 (DDEEHGADESSECAECRARRDREKGQDK) form a disordered region. Residues 194–208 (AECRARRDREKGQDK) show a composition bias toward basic and acidic residues.

It belongs to the TMEM160 family.

It is found in the mitochondrion inner membrane. The polypeptide is Transmembrane protein 160 (Danio rerio (Zebrafish)).